A 483-amino-acid chain; its full sequence is MAEFTPITIAYGDGIGPEIMDAVLYILRQAEARISLETIEVGEKLYKKHYTSGISEESWNVIQRTGIILKAPITTPQSGGYKSLNVTIRKTLQLFANIRPAVSFHPFTRTLHPNLNLTIIRENEEDLYSGIEYRQTHNMYESLKLISHTGCKKIIRYAFEYAVKNNRKKVTCLSKDNIMKFSDGIFHRVFNEIAKEYPQIDNEHYIIDIGTAKLATTPEIFDIIVTSNLYGDIISDVAAEISGSVGLAGSANIGQHYAMFEAVHGSAPDIAGKGIANPSGLLNAAIMMLVHIGQGDIASLIENAWKKTIEDGVHTFDIYSEHSSSKKVCTKEFAEEVIKRLGQLPMTLPKASYPLIVKKQESKIEYKIDTTEVKKLVGTDIFINIHVFSAHDIADKINKLDIGNFELKTISSKGLKLWPHDLRFEIISDHWCCRFMNKDGTEIKHLDIIILLQALSKANIDFIKVENLFEFDGVACYSLAQGE.

Thr-74 contributes to the NADP(+) binding site. Residues Ser-83, Asn-85, Arg-89, Arg-99, and Arg-121 each contribute to the D-threo-isocitrate site. Asp-232 contacts Mg(2+). Residues 264 to 270 and Asn-277 contribute to the NADP(+) site; that span reads HGSAPDI.

It belongs to the isocitrate and isopropylmalate dehydrogenases family. In terms of assembly, homodimer. Mg(2+) is required as a cofactor. Requires Mn(2+) as cofactor.

It carries out the reaction D-threo-isocitrate + NADP(+) = 2-oxoglutarate + CO2 + NADPH. Its function is as follows. Catalyzes the oxidative decarboxylation of isocitrate to 2-oxoglutarate and carbon dioxide with the concomitant reduction of NADP(+). This chain is Isocitrate dehydrogenase [NADP] (icd), found in Rickettsia typhi (strain ATCC VR-144 / Wilmington).